A 213-amino-acid polypeptide reads, in one-letter code: Reticulon-3 (213 aa).

Positions 1–16 (MADTSGPQSSHISSSA) are enriched in polar residues. Residues 1–20 (MADTSGPQSSHISSSAGEKG) form a disordered region. A Reticulon domain is found at 25–213 (VQDLLYWRDV…LPGALKKKSE (189 aa)). 2 helical membrane passes run 45–65 (MVLL…YLVL) and 154–174 (VFNG…APIV).

As to quaternary structure, homodimer.

The protein resides in the endoplasmic reticulum membrane. It localises to the golgi apparatus membrane. Functionally, may be involved in membrane trafficking in the early secretory pathway. In Xenopus tropicalis (Western clawed frog), this protein is Reticulon-3 (rtn3).